Consider the following 363-residue polypeptide: MRVPVATKSHHYEVLLGHRFLTEAIQTYADQLNKADKFFVFTDAHVWEAQGDYFKANFPYDFEVFILPGGEACKTFEQYYAAQTFLLEQKCSRKSFVFAFGGGAVGDLTGFVAATYMRGIPFIQIPTTILAHDSAVGGKTAINHPLGKNMIGAFYQPEGVIYDTVFSETLPVREIRSGTAELIKHAMISDSAWLEELMAADSVMHFNQQELAMQLKKGIEVKAKIVAEDETEQSVRKFLNLGHTYGHAIEAAAGYGKVAHGEAVMIGLVYCLLLSERYGELNRPFTKAFLQFAVKNGYPFEAVNDYTFEQLTSYLMKDKKTEYGILQFVLLEKIGKPFVRAIDLKECKEVDAEYRELLAEVLV.

NAD(+)-binding positions include 103-107 (GAVGD), 127-128 (TT), Lys-139, Lys-148, and 166-169 (FSET). Zn(2+) contacts are provided by Glu-181, His-243, and His-260.

It belongs to the sugar phosphate cyclases superfamily. Dehydroquinate synthase family. Requires Co(2+) as cofactor. It depends on Zn(2+) as a cofactor. NAD(+) serves as cofactor.

The protein localises to the cytoplasm. The catalysed reaction is 7-phospho-2-dehydro-3-deoxy-D-arabino-heptonate = 3-dehydroquinate + phosphate. It participates in metabolic intermediate biosynthesis; chorismate biosynthesis; chorismate from D-erythrose 4-phosphate and phosphoenolpyruvate: step 2/7. Catalyzes the conversion of 3-deoxy-D-arabino-heptulosonate 7-phosphate (DAHP) to dehydroquinate (DHQ). This Lysinibacillus sphaericus (strain C3-41) protein is 3-dehydroquinate synthase.